The chain runs to 218 residues: Thiopurine S-methyltransferase (218 aa).

Residues tryptophan 11, leucine 46, glutamate 67, and arginine 122 each coordinate S-adenosyl-L-methionine.

This sequence belongs to the class I-like SAM-binding methyltransferase superfamily. TPMT family.

It is found in the cytoplasm. The catalysed reaction is S-adenosyl-L-methionine + a thiopurine = S-adenosyl-L-homocysteine + a thiopurine S-methylether.. This Vibrio cholerae serotype O1 (strain ATCC 39541 / Classical Ogawa 395 / O395) protein is Thiopurine S-methyltransferase.